The following is a 172-amino-acid chain: MKRDRKEEIVQEVAEKINRSQGIYLTEFQGLSVAKMSELRREFRKVGVEYRVVKNTLIKQALKDLAGADKLAPGLKSTTAVAFGFDDPVAPAKVIRKFSKTNDALKFKMASIDGVVFGPDQLPLLSEMLTKTENIGRAAGLINGVVSSVPMVVNAVMRNLVCALDQIAKQKQ.

Belongs to the universal ribosomal protein uL10 family. Part of the ribosomal stalk of the 50S ribosomal subunit. The N-terminus interacts with L11 and the large rRNA to form the base of the stalk. The C-terminus forms an elongated spine to which L12 dimers bind in a sequential fashion forming a multimeric L10(L12)X complex.

Forms part of the ribosomal stalk, playing a central role in the interaction of the ribosome with GTP-bound translation factors. The chain is Large ribosomal subunit protein uL10 from Pelodictyon phaeoclathratiforme (strain DSM 5477 / BU-1).